Reading from the N-terminus, the 306-residue chain is Dermonecrotic toxin LarSicTox-alphaIB1ai (306 aa).

Valine 1 is a signal peptide. A propeptide spanning residues 2 to 27 is cleaved from the precursor; it reads RATEKFASMYFFCHSPQSAETDVAER. Histidine 38 is an active-site residue. Glutamate 58 and aspartate 60 together coordinate Mg(2+). The active-site Nucleophile is the histidine 74. 2 cysteine pairs are disulfide-bonded: cysteine 78/cysteine 84 and cysteine 80/cysteine 223. Aspartate 118 contacts Mg(2+). An N-linked (GlcNAc...) asparagine glycan is attached at asparagine 283.

This sequence belongs to the arthropod phospholipase D family. Class II subfamily. Mg(2+) is required as a cofactor. As to expression, expressed by the venom gland.

The protein resides in the secreted. It catalyses the reaction an N-(acyl)-sphingosylphosphocholine = an N-(acyl)-sphingosyl-1,3-cyclic phosphate + choline. The catalysed reaction is an N-(acyl)-sphingosylphosphoethanolamine = an N-(acyl)-sphingosyl-1,3-cyclic phosphate + ethanolamine. It carries out the reaction a 1-acyl-sn-glycero-3-phosphocholine = a 1-acyl-sn-glycero-2,3-cyclic phosphate + choline. The enzyme catalyses a 1-acyl-sn-glycero-3-phosphoethanolamine = a 1-acyl-sn-glycero-2,3-cyclic phosphate + ethanolamine. Its function is as follows. Dermonecrotic toxins cleave the phosphodiester linkage between the phosphate and headgroup of certain phospholipids (sphingolipid and lysolipid substrates), forming an alcohol (often choline) and a cyclic phosphate. This toxin acts on sphingomyelin (SM). It may also act on ceramide phosphoethanolamine (CPE), lysophosphatidylcholine (LPC) and lysophosphatidylethanolamine (LPE), but not on lysophosphatidylserine (LPS), and lysophosphatidylglycerol (LPG). It acts by transphosphatidylation, releasing exclusively cyclic phosphate products as second products. Induces dermonecrosis, hemolysis, increased vascular permeability, edema, inflammatory response, and platelet aggregation. The polypeptide is Dermonecrotic toxin LarSicTox-alphaIB1ai (Loxosceles arizonica (Arizona brown spider)).